The following is a 211-amino-acid chain: MNEGEILFQFTTWLIFLISYLIGSIPFGLLLTKLAKLGDVRTIGSGNIGATNVLRTGNKKVAALTLLCDILKGTLVILVIKFLTDPIENNIFISLAGFFAFLGHLFPVWLKFKGGKGVATYLGVCLGLYWPAAIVFITAWIVLFLITRYSSLSALIAVIITPIFVHFSYPYLYAHCILVIMSLLVMIKHHANIGRLLVGKESKIGTQNGGK.

5 consecutive transmembrane segments (helical) span residues 10–30 (FTTWLIFLISYLIGSIPFGLL), 63–83 (ALTLLCDILKGTLVILVIKFL), 90–110 (NIFISLAGFFAFLGHLFPVWL), 126–146 (LGLYWPAAIVFITAWIVLFLI), and 152–172 (LSALIAVIITPIFVHFSYPYL).

This sequence belongs to the PlsY family. Probably interacts with PlsX.

The protein localises to the cell inner membrane. It catalyses the reaction an acyl phosphate + sn-glycerol 3-phosphate = a 1-acyl-sn-glycero-3-phosphate + phosphate. Its pathway is lipid metabolism; phospholipid metabolism. Catalyzes the transfer of an acyl group from acyl-phosphate (acyl-PO(4)) to glycerol-3-phosphate (G3P) to form lysophosphatidic acid (LPA). This enzyme utilizes acyl-phosphate as fatty acyl donor, but not acyl-CoA or acyl-ACP. The polypeptide is Glycerol-3-phosphate acyltransferase (Bartonella henselae (strain ATCC 49882 / DSM 28221 / CCUG 30454 / Houston 1) (Rochalimaea henselae)).